Consider the following 185-residue polypeptide: Alcohol dehydrogenase 1 (185 aa).

NAD(+) contacts are provided by residues 10–15 (GLGGVG), Asp34, Lys39, 103–105 (VGV), and Arg180.

This sequence belongs to the zinc-containing alcohol dehydrogenase family. Class-I subfamily. As to quaternary structure, homodimer. It depends on Zn(2+) as a cofactor.

Its subcellular location is the cytoplasm. It catalyses the reaction a primary alcohol + NAD(+) = an aldehyde + NADH + H(+). The catalysed reaction is a secondary alcohol + NAD(+) = a ketone + NADH + H(+). This chain is Alcohol dehydrogenase 1 (ADH1), found in Anas platyrhynchos (Mallard).